The following is a 175-amino-acid chain: ATP synthase subunit b 2 (175 aa).

The helical transmembrane segment at 20–40 (LIFWTTITFVLVLIILKKIAW) threads the bilayer.

Belongs to the ATPase B chain family. F-type ATPases have 2 components, F(1) - the catalytic core - and F(0) - the membrane proton channel. F(1) has five subunits: alpha(3), beta(3), gamma(1), delta(1), epsilon(1). F(0) has four main subunits: a(1), b(2) and c(10-14). The alpha and beta chains form an alternating ring which encloses part of the gamma chain. F(1) is attached to F(0) by a central stalk formed by the gamma and epsilon chains, while a peripheral stalk is formed by the delta and b chains.

Its subcellular location is the cell inner membrane. In terms of biological role, f(1)F(0) ATP synthase produces ATP from ADP in the presence of a proton or sodium gradient. F-type ATPases consist of two structural domains, F(1) containing the extramembraneous catalytic core and F(0) containing the membrane proton channel, linked together by a central stalk and a peripheral stalk. During catalysis, ATP synthesis in the catalytic domain of F(1) is coupled via a rotary mechanism of the central stalk subunits to proton translocation. Functionally, component of the F(0) channel, it forms part of the peripheral stalk, linking F(1) to F(0). The chain is ATP synthase subunit b 2 from Chlorobium luteolum (strain DSM 273 / BCRC 81028 / 2530) (Pelodictyon luteolum).